Reading from the N-terminus, the 629-residue chain is tRNA uridine 5-carboxymethylaminomethyl modification enzyme MnmG (629 aa).

FAD contacts are provided by residues 13-18 (GGGHAG), Val125, and Ser180. 273–287 (GPRYCPSIEDKVMRF) is a binding site for NAD(+). Residue Gln370 participates in FAD binding.

It belongs to the MnmG family. In terms of assembly, homodimer. Heterotetramer of two MnmE and two MnmG subunits. FAD is required as a cofactor.

The protein resides in the cytoplasm. In terms of biological role, NAD-binding protein involved in the addition of a carboxymethylaminomethyl (cmnm) group at the wobble position (U34) of certain tRNAs, forming tRNA-cmnm(5)s(2)U34. This is tRNA uridine 5-carboxymethylaminomethyl modification enzyme MnmG from Sodalis glossinidius (strain morsitans).